The primary structure comprises 142 residues: Salivary protein 15a (142 aa).

Positions 1–20 (MKYLGLALISAVFLIGACQA) are cleaved as a signal peptide. Intrachain disulfides connect C27-C44, C40-C108, and C91-C117.

The protein belongs to the PBP/GOBP family. In terms of tissue distribution, female salivary gland (at protein level).

It localises to the secreted. Functionally, inhibits contact coagulation pathway activation in the host by sequestering anionic polymers, such as polyphosphate and dextran sulfate, and thus blocking interaction of protein components of the pathway with negatively charged surfaces. Inhibits dextran sulfate-mediated autoactivation of host coagulation factor XII (F12). Inhibits dextran sulfate-mediated autoactivation of host factor XI (F11). Inhibits polyphosphate-mediated activation of host F11 by thrombin (F2). May inhibit dextran sulfate-mediated bradykinin generation in host plasma. The chain is Salivary protein 15a from Phlebotomus duboscqi (Sandfly).